Reading from the N-terminus, the 761-residue chain is T-box protein 1 (761 aa).

2 disordered regions span residues 1–85 and 167–210; these read MLGR…QPLT and QTDP…CSSP. Composition is skewed to polar residues over residues 37–61 and 167–179; these read DLQNTPARSNASTDYSTQSLSNQAG and QTDPANPSGFPQA. Composition is skewed to low complexity over residues 180 to 191 and 198 to 210; these read SPSDLSTTSSQS and SSPSVSSSTCSSP. The segment at residues 287 to 456 is a DNA-binding region (T-box); that stretch reads LWRKFHEHRT…HNPFAKGFRD (170 aa). Positions 496–510 are enriched in polar residues; it reads TTGFPCQTNPTQRSN. 3 disordered regions span residues 496-515, 545-612, and 637-687; these read TTGFPCQTNPTQRSNGQHEG, SGDA…TPAH, and VCSS…LLTT. Basic and acidic residues predominate over residues 600 to 612; it reads GCERSNEKHTPAH. Over residues 637 to 646 the composition is skewed to polar residues; the sequence is VCSSDNSNPD. Over residues 656–687 the composition is skewed to low complexity; that stretch reads SPAGSGSPSVTSGTSLFTSGSSAAPSPPLLTT.

Its subcellular location is the nucleus. Probable transcriptional regulator involved in developmental processes. The polypeptide is T-box protein 1 (tbr1) (Patiria pectinifera (Starfish)).